The following is a 110-amino-acid chain: Nucleoid-associated protein bbp_426 (110 aa).

Belongs to the YbaB/EbfC family. As to quaternary structure, homodimer.

It is found in the cytoplasm. It localises to the nucleoid. Binds to DNA and alters its conformation. May be involved in regulation of gene expression, nucleoid organization and DNA protection. The sequence is that of Nucleoid-associated protein bbp_426 from Buchnera aphidicola subsp. Baizongia pistaciae (strain Bp).